Consider the following 309-residue polypeptide: Malate dehydrogenase (309 aa).

Residues Gly9 to Gly14 and Asp33 contribute to the NAD(+) site. Substrate contacts are provided by Arg82 and Arg88. NAD(+) contacts are provided by residues Asn95 and Val118–Asn120. Residues Asn120 and Arg151 each contribute to the substrate site. The Proton acceptor role is filled by His175.

This sequence belongs to the LDH/MDH superfamily. MDH type 3 family. In terms of assembly, homotetramer (active enzyme); homodimer and homotrimer at temperatures lower than 55 degrees Celsius (inactive forms).

The enzyme catalyses (S)-malate + NAD(+) = oxaloacetate + NADH + H(+). Its function is as follows. Catalyzes the reversible oxidation of malate to oxaloacetate. The polypeptide is Malate dehydrogenase (Chloroflexus aurantiacus (strain ATCC 29366 / DSM 635 / J-10-fl)).